Consider the following 167-residue polypeptide: Putative NADH-quinone oxidoreductase subunit B 2 (167 aa).

This sequence belongs to the complex I 20 kDa subunit family. In terms of assembly, NDH-1 is composed of 14 different subunits. Subunits NuoB, C, D, E, F, and G constitute the peripheral sector of the complex.

It localises to the cell inner membrane. It carries out the reaction a quinone + NADH + 5 H(+)(in) = a quinol + NAD(+) + 4 H(+)(out). Its function is as follows. NDH-1 shuttles electrons from NADH, via FMN and iron-sulfur (Fe-S) centers, to quinones in the respiratory chain. Couples the redox reaction to proton translocation (for every two electrons transferred, four hydrogen ions are translocated across the cytoplasmic membrane), and thus conserves the redox energy in a proton gradient. This Burkholderia pseudomallei (strain 1710b) protein is Putative NADH-quinone oxidoreductase subunit B 2.